A 396-amino-acid chain; its full sequence is Adenosine 3'-phospho 5'-phosphosulfate transporter 2 (396 aa).

Residues 22-42 are disordered; the sequence is NGGESAGNSPPSQRKSSTSES. Positions 27 to 42 are enriched in polar residues; it reads AGNSPPSQRKSSTSES. 2 positions are modified to phosphoserine: S37 and S40. Residue N57 is glycosylated (N-linked (GlcNAc...) asparagine). Transmembrane regions (helical) follow at residues 66–86, 91–111, 140–160, 163–183, 189–209, 216–236, 253–273, 290–310, 318–338, and 342–362; these read CAGVFFLYILYGYLQELIFTV, PYGWFLTLVQFGYYIGFGLVE, LILAALTLGTMGLSNSSLGYL, PTQVIFKCCKLIPVLVGSILI, GLLDFAAATCMCIGLAWFTLA, NFNLLGVAMISGALLCDAAIG, VVFYSYGLGFVYLFVIMLVTG, FGYGFLFSLSGYLGIQFVLAL, IAATVTTARKAVTIAFSFVLF, and FTLQYLWSGLIVVLGIYLNVY.

The protein belongs to the nucleotide-sugar transporter family. SLC35B subfamily.

Its subcellular location is the golgi apparatus membrane. Mediates the transport of adenosine 3'-phospho 5'-phosphosulfate (PAPS), from cytosol into Golgi. PAPS is a universal sulfuryl donor for sulfation events that take place in the Golgi. Essential for viability. Involved in glycosaminoglycan synthesis and the subsequent signaling. May be involved in hh and dpp signaling by controlling the sulfation of heparan sulfate (HS). The chain is Adenosine 3'-phospho 5'-phosphosulfate transporter 2 (Papst2) from Drosophila melanogaster (Fruit fly).